The chain runs to 753 residues: Enhancer of polycomb-like protein 1 (753 aa).

Disordered stretches follow at residues 1–75 and 429–490; these read MAAA…RDLH and VRTE…LPPA. Residues 46–71 show a composition bias toward polar residues; it reads LDSNELEPSQVHHLNSNASSSSTQQP. Basic and acidic residues predominate over residues 429-449; the sequence is VRTEDEEREKKREKKKQDQEL. Over residues 450–463 the composition is skewed to low complexity; that stretch reads ALKQQQALQQQQQQ.

The protein belongs to the enhancer of polycomb family. As to quaternary structure, component of the NuA4 histone acetyltransferase complex.

The protein resides in the nucleus. Component of the NuA4 histone acetyltransferase complex which is involved in transcriptional activation of selected genes principally by acetylation of nucleosomal histone H4 and H2A. The NuA4 complex is also involved in DNA repair. Involved in gene silencing by neighboring heterochromatin, blockage of the silencing spreading along the chromosome, and required for cell cycle progression through G2/M. This is Enhancer of polycomb-like protein 1 (EPL1) from Candida albicans (strain SC5314 / ATCC MYA-2876) (Yeast).